The following is a 733-amino-acid chain: Tyrosine-protein kinase ptk (733 aa).

Transmembrane regions (helical) follow at residues 19–39 (LFFS…LSLI) and 438–458 (LQIL…LALL). 542-550 (GPAPEVGKS) lines the ATP pocket.

The protein belongs to the etk/wzc family. Requires Mg(2+) as cofactor. The cofactor is Mn(2+). Autophosphorylated on several Tyr residues. Dephosphorylated by ptp.

The protein localises to the cell inner membrane. The catalysed reaction is L-tyrosyl-[protein] + ATP = O-phospho-L-tyrosyl-[protein] + ADP + H(+). The protein operates within glycan metabolism; exopolysaccharide biosynthesis. Functionally, may be involved in the production and the transport of exopolysaccharides. The protein is Tyrosine-protein kinase ptk (ptk) of Acinetobacter johnsonii.